Consider the following 257-residue polypeptide: Steroid 5-alpha-reductase DET2 (257 aa).

6 consecutive transmembrane segments (helical) span residues 11-31, 47-67, 78-97, 110-130, 151-171, and 200-220; these read FIVFFILVMAFPTFILCQFFT, ISPPIAWAFMESPTLWLTIIV, LAFLLISPYLFHYTNRTIIY, FPLNIAVTAFIFNLLNAYIQS, IGLVIFGSGMLLNIWADGVLL, and IMEWLGWALMTWSWAGLAFFV.

This sequence belongs to the steroid 5-alpha reductase family. In terms of tissue distribution, mostly expressed in leaves and hypocotyls and, to a lower extent, in stems, cotyledons, roots, seeds and callus.

The protein localises to the membrane. The catalysed reaction is a 3-oxo-5alpha-steroid + NADP(+) = a 3-oxo-Delta(4)-steroid + NADPH + H(+). It participates in plant hormone biosynthesis; brassinosteroid biosynthesis. Its activity is regulated as follows. Repressed by steroid (4-MA, VG106, PD91, PD17, Finasteride) and non-steroid (AS601811, AFA27, AFA76, AFA131, AFA192) inhibitors; steroid inhibitors are generally more efficient. Involved in a reduction step in the biosynthesis of the plant steroid, brassinolide (BL). Can use progesterone, testosterone, androstenedione and campestenone as substrate. The polypeptide is Steroid 5-alpha-reductase DET2 (Solanum lycopersicum (Tomato)).